The sequence spans 335 residues: Ketol-acid reductoisomerase (NADP(+)) (335 aa).

Residues Ala2 to Thr182 enclose the KARI N-terminal Rossmann domain. Residues Tyr25–Gln28, Arg48, Ser51, Ser53, and Asp83–Gln86 each bind NADP(+). Residue His108 is part of the active site. Residue Gly134 participates in NADP(+) binding. The region spanning Thr183 to Leu328 is the KARI C-terminal knotted domain. Mg(2+) is bound by residues Asp191, Glu195, Glu227, and Glu231. Ser252 contacts substrate.

This sequence belongs to the ketol-acid reductoisomerase family. The cofactor is Mg(2+).

The catalysed reaction is (2R)-2,3-dihydroxy-3-methylbutanoate + NADP(+) = (2S)-2-acetolactate + NADPH + H(+). It carries out the reaction (2R,3R)-2,3-dihydroxy-3-methylpentanoate + NADP(+) = (S)-2-ethyl-2-hydroxy-3-oxobutanoate + NADPH + H(+). It participates in amino-acid biosynthesis; L-isoleucine biosynthesis; L-isoleucine from 2-oxobutanoate: step 2/4. It functions in the pathway amino-acid biosynthesis; L-valine biosynthesis; L-valine from pyruvate: step 2/4. Involved in the biosynthesis of branched-chain amino acids (BCAA). Catalyzes an alkyl-migration followed by a ketol-acid reduction of (S)-2-acetolactate (S2AL) to yield (R)-2,3-dihydroxy-isovalerate. In the isomerase reaction, S2AL is rearranged via a Mg-dependent methyl migration to produce 3-hydroxy-3-methyl-2-ketobutyrate (HMKB). In the reductase reaction, this 2-ketoacid undergoes a metal-dependent reduction by NADPH to yield (R)-2,3-dihydroxy-isovalerate. This Methanosarcina barkeri (strain Fusaro / DSM 804) protein is Ketol-acid reductoisomerase (NADP(+)).